Reading from the N-terminus, the 511-residue chain is U3 snoRNP-associated protein-like YAOH (511 aa).

Residues 1–18 (MAPRPRKRVSRPKPRATS) are compositionally biased toward basic residues. The segment at 1–117 (MAPRPRKRVS…EDEDEGEEAG (117 aa)) is disordered. Composition is skewed to acidic residues over residues 44 to 53 (EDIESEDSDL) and 66 to 80 (DDGE…EQET). The span at 81–105 (AGEKKMRIAKELLKKVTDAARRRRE) shows a compositional bias: basic and acidic residues. WD repeat units follow at residues 158-197 (KHRQ…SEKY), 217-256 (KRSK…HIQA), 259-298 (GHRG…YMNC), 301-339 (GHQN…QLLF), 342-380 (PATA…PTHI), 412-451 (SAQS…KGIR), and 457-497 (RLDG…QNGV).

This sequence belongs to the WD repeat RRP9 family.

It localises to the nucleus. The protein localises to the nucleolus. In terms of biological role, component of a nucleolar small nuclear ribonucleoprotein particle (snoRNP) thought to participate in the processing and modification of pre-ribosomal RNA. Essential for embryogenesis. In Oryza sativa subsp. japonica (Rice), this protein is U3 snoRNP-associated protein-like YAOH.